The chain runs to 513 residues: NADH-quinone oxidoreductase subunit N (513 aa).

The next 14 membrane-spanning stretches (helical) occupy residues 20–40 (SVGF…LIVV), 49–69 (STLL…FIYQ), 88–108 (FAIF…VITM), 117–137 (ISSM…MMMM), 144–164 (LMIF…AGYF), 178–198 (LIYG…IYGV), 219–239 (FVML…IGAV), 260–280 (LSVA…YVAL), 295–315 (WFTL…VVAL), 323–343 (LLAY…IVMD), 351–371 (LFYL…VVLI), 394–414 (GAAL…IGFI), 429–451 (IFMW…YMLI), and 474–494 (LVAQ…GLFF).

The protein belongs to the complex I subunit 2 family. As to quaternary structure, NDH-1 is composed of 14 different subunits. Subunits NuoA, H, J, K, L, M, N constitute the membrane sector of the complex.

The protein localises to the cell inner membrane. The catalysed reaction is a quinone + NADH + 5 H(+)(in) = a quinol + NAD(+) + 4 H(+)(out). Its function is as follows. NDH-1 shuttles electrons from NADH, via FMN and iron-sulfur (Fe-S) centers, to quinones in the respiratory chain. The immediate electron acceptor for the enzyme in this species is believed to be a menaquinone. Couples the redox reaction to proton translocation (for every two electrons transferred, four hydrogen ions are translocated across the cytoplasmic membrane), and thus conserves the redox energy in a proton gradient. The polypeptide is NADH-quinone oxidoreductase subunit N (Chlorobium chlorochromatii (strain CaD3)).